The sequence spans 101 residues: Urease subunit beta (101 aa).

Belongs to the urease beta subunit family. Heterotrimer of UreA (gamma), UreB (beta) and UreC (alpha) subunits. Three heterotrimers associate to form the active enzyme.

It is found in the cytoplasm. The catalysed reaction is urea + 2 H2O + H(+) = hydrogencarbonate + 2 NH4(+). Its pathway is nitrogen metabolism; urea degradation; CO(2) and NH(3) from urea (urease route): step 1/1. The polypeptide is Urease subunit beta (Roseobacter denitrificans (strain ATCC 33942 / OCh 114) (Erythrobacter sp. (strain OCh 114))).